The following is a 312-amino-acid chain: Malate dehydrogenase (312 aa).

NAD(+)-binding positions include 10–15 and aspartate 34; that span reads GAGNTG. Substrate-binding residues include arginine 85 and arginine 91. Residues asparagine 98 and 121–123 each bind NAD(+); that span reads LTN. Residues asparagine 123 and arginine 154 each contribute to the substrate site. The active-site Proton acceptor is histidine 178.

It belongs to the LDH/MDH superfamily. MDH type 3 family.

It catalyses the reaction (S)-malate + NAD(+) = oxaloacetate + NADH + H(+). Catalyzes the reversible oxidation of malate to oxaloacetate. In Staphylococcus saprophyticus subsp. saprophyticus (strain ATCC 15305 / DSM 20229 / NCIMB 8711 / NCTC 7292 / S-41), this protein is Malate dehydrogenase.